We begin with the raw amino-acid sequence, 215 residues long: Small ribosomal subunit protein uS7 (215 aa).

It belongs to the universal ribosomal protein uS7 family. As to quaternary structure, part of the 30S ribosomal subunit.

Functionally, one of the primary rRNA binding proteins, it binds directly to 16S rRNA where it nucleates assembly of the head domain of the 30S subunit. Is located at the subunit interface close to the decoding center. In Thermococcus onnurineus (strain NA1), this protein is Small ribosomal subunit protein uS7.